Reading from the N-terminus, the 345-residue chain is Phosphoribosylformylglycinamidine cyclo-ligase (345 aa).

It belongs to the AIR synthase family.

The protein localises to the cytoplasm. The enzyme catalyses 2-formamido-N(1)-(5-O-phospho-beta-D-ribosyl)acetamidine + ATP = 5-amino-1-(5-phospho-beta-D-ribosyl)imidazole + ADP + phosphate + H(+). It participates in purine metabolism; IMP biosynthesis via de novo pathway; 5-amino-1-(5-phospho-D-ribosyl)imidazole from N(2)-formyl-N(1)-(5-phospho-D-ribosyl)glycinamide: step 2/2. The chain is Phosphoribosylformylglycinamidine cyclo-ligase from Escherichia coli O7:K1 (strain IAI39 / ExPEC).